The chain runs to 377 residues: Chaperone protein DnaJ (377 aa).

Residues 5–70 (DCYEVLGISR…QKKAAYDQYG (66 aa)) form the J domain. The segment at 133–211 (GISKEIQIPT…CHGHGRYERS (79 aa)) adopts a CR-type zinc-finger fold. 8 residues coordinate Zn(2+): cysteine 146, cysteine 149, cysteine 163, cysteine 166, cysteine 185, cysteine 188, cysteine 199, and cysteine 202. 4 CXXCXGXG motif repeats span residues 146–153 (CEQCNGSG), 163–170 (CGTCYGQG), 185–192 (CPTCRGQG), and 199–206 (CHKCHGHG).

This sequence belongs to the DnaJ family. Homodimer. Requires Zn(2+) as cofactor.

It is found in the cytoplasm. Functionally, participates actively in the response to hyperosmotic and heat shock by preventing the aggregation of stress-denatured proteins and by disaggregating proteins, also in an autonomous, DnaK-independent fashion. Unfolded proteins bind initially to DnaJ; upon interaction with the DnaJ-bound protein, DnaK hydrolyzes its bound ATP, resulting in the formation of a stable complex. GrpE releases ADP from DnaK; ATP binding to DnaK triggers the release of the substrate protein, thus completing the reaction cycle. Several rounds of ATP-dependent interactions between DnaJ, DnaK and GrpE are required for fully efficient folding. Also involved, together with DnaK and GrpE, in the DNA replication of plasmids through activation of initiation proteins. This Psychromonas ingrahamii (strain DSM 17664 / CCUG 51855 / 37) protein is Chaperone protein DnaJ.